Consider the following 259-residue polypeptide: Ribosomal RNA small subunit methyltransferase A (259 aa).

S-adenosyl-L-methionine is bound by residues N15, L17, G41, E62, D86, and N105.

It belongs to the class I-like SAM-binding methyltransferase superfamily. rRNA adenine N(6)-methyltransferase family. RsmA subfamily.

It is found in the cytoplasm. It carries out the reaction adenosine(1518)/adenosine(1519) in 16S rRNA + 4 S-adenosyl-L-methionine = N(6)-dimethyladenosine(1518)/N(6)-dimethyladenosine(1519) in 16S rRNA + 4 S-adenosyl-L-homocysteine + 4 H(+). Specifically dimethylates two adjacent adenosines (A1518 and A1519) in the loop of a conserved hairpin near the 3'-end of 16S rRNA in the 30S particle. May play a critical role in biogenesis of 30S subunits. This Mycoplasmopsis synoviae (strain 53) (Mycoplasma synoviae) protein is Ribosomal RNA small subunit methyltransferase A.